Reading from the N-terminus, the 452-residue chain is Imidazoleglycerol-phosphate dehydratase (452 aa).

Residues 1–233 (MASPVQALLL…VGASVVLTPG (233 aa)) are unknown activity. Residues 234-452 (LGELLDLVPA…GVPSTKGVLA (219 aa)) form an imidazoleglycerol-phosphate dehydratase region.

It belongs to the imidazoleglycerol-phosphate dehydratase family.

The enzyme catalyses D-erythro-1-(imidazol-4-yl)glycerol 3-phosphate = 3-(imidazol-4-yl)-2-oxopropyl phosphate + H2O. The protein operates within amino-acid biosynthesis; L-histidine biosynthesis; L-histidine from 5-phospho-alpha-D-ribose 1-diphosphate: step 6/9. This Phytophthora nicotianae (Potato buckeye rot agent) protein is Imidazoleglycerol-phosphate dehydratase (HIS3).